A 139-amino-acid chain; its full sequence is HTH-type transcriptional regulator MntR (139 aa).

An HTH dtxR-type domain is found at Met-1 to Thr-63. Mn(2+) contacts are provided by Asp-8, Glu-11, His-77, Glu-99, Glu-102, and His-103.

The protein belongs to the DtxR/MntR family. In terms of assembly, homodimer.

Its subcellular location is the cytoplasm. Its activity is regulated as follows. DNA binding is strongly activated by Mn(2+). Functionally, central regulator of manganese homeostasis. The chain is HTH-type transcriptional regulator MntR from Lysinibacillus sphaericus (strain C3-41).